Consider the following 428-residue polypeptide: uncharacterized protein (428 aa).

Transmembrane regions (helical) follow at residues Val-26–Phe-46, Ala-51–Leu-71, Ala-90–Leu-110, Thr-135–Gly-155, Met-177–Gly-197, Leu-223–Val-243, Thr-278–Val-298, Leu-314–Ile-334, Thr-359–Ala-379, and Val-407–Phe-427.

This sequence belongs to the CitM (TC 2.A.11) transporter family.

The protein resides in the cell membrane. This is an uncharacterized protein from Mycobacterium tuberculosis (strain CDC 1551 / Oshkosh).